A 477-amino-acid polypeptide reads, in one-letter code: Probable cytosol aminopeptidase (477 aa).

Residues Lys-245 and Asp-250 each coordinate Mn(2+). The active site involves Lys-257. Residues Asp-268, Asp-327, and Glu-329 each coordinate Mn(2+). Arg-331 is a catalytic residue.

The protein belongs to the peptidase M17 family. Requires Mn(2+) as cofactor.

It is found in the cytoplasm. The catalysed reaction is Release of an N-terminal amino acid, Xaa-|-Yaa-, in which Xaa is preferably Leu, but may be other amino acids including Pro although not Arg or Lys, and Yaa may be Pro. Amino acid amides and methyl esters are also readily hydrolyzed, but rates on arylamides are exceedingly low.. It catalyses the reaction Release of an N-terminal amino acid, preferentially leucine, but not glutamic or aspartic acids.. Its function is as follows. Presumably involved in the processing and regular turnover of intracellular proteins. Catalyzes the removal of unsubstituted N-terminal amino acids from various peptides. This Exiguobacterium sibiricum (strain DSM 17290 / CCUG 55495 / CIP 109462 / JCM 13490 / 255-15) protein is Probable cytosol aminopeptidase.